A 248-amino-acid polypeptide reads, in one-letter code: 3-deoxy-manno-octulosonate cytidylyltransferase (248 aa).

It belongs to the KdsB family.

It is found in the cytoplasm. It carries out the reaction 3-deoxy-alpha-D-manno-oct-2-ulosonate + CTP = CMP-3-deoxy-beta-D-manno-octulosonate + diphosphate. The protein operates within nucleotide-sugar biosynthesis; CMP-3-deoxy-D-manno-octulosonate biosynthesis; CMP-3-deoxy-D-manno-octulosonate from 3-deoxy-D-manno-octulosonate and CTP: step 1/1. It participates in bacterial outer membrane biogenesis; lipopolysaccharide biosynthesis. In terms of biological role, activates KDO (a required 8-carbon sugar) for incorporation into bacterial lipopolysaccharide in Gram-negative bacteria. The protein is 3-deoxy-manno-octulosonate cytidylyltransferase of Salmonella typhi.